Consider the following 762-residue polypeptide: ABC-type oligopeptide transporter ABCB9 (762 aa).

Transmembrane regions (helical) follow at residues 7–27 (VVVTLAFVSMDVGVTTAIYAF), 47–67 (VLDLWAACLYRSCLLLGATIG), 84–104 (LVITLVCLFVGIYAMAKLLLF), 116–136 (FWALFVWTYISLAASFLLWGL), 181–201 (VAFLVAASFFLIVAALGETFL), 221–241 (FTTAVVVVCLLAIGSSLAAGI), 315–335 (VFMFSLSWQLSLVTFMGFPII), and 412–432 (SGLTLLVVQVSILYYGGHLVI). In terms of domain architecture, ABC transmembrane type-1 spans 184-467 (LVAASFFLIV…VGSVYSGLMQ (284 aa)). The region spanning 500-736 (VDFENVTFTY…GGLYAKLVQR (237 aa)) is the ABC transporter domain. Residue 535-542 (GPSGSGKS) participates in ATP binding.

This sequence belongs to the ABC transporter superfamily. ABCB family. MHC peptide exporter (TC 3.A.1.209) subfamily. Homodimer. Interacts (via TMD0 region) with LAMP1; this interaction strongly stabilizes ABCB9 and protects ABCB9 against lysosomal degradation. Interacts (via TMD0 region) with LAMP2 (isoform LAMP-2B). Interacts (via TMD0) with YIF1B; this interaction allows (but is not essential) the ER-to-Golgi trafficking and strongly depends on a salt bridge within TMD0. Found in testis, particularly in the Sertoli cells of the seminiferous tubules. Also expressed in kidney, brain, heart, lung, spleen, thymus, intestine and testis. Higher expression detected in brain and testis than in thymus and intestine.

It is found in the lysosome membrane. The catalysed reaction is a [oligopeptide](in) + ATP + H2O = a [oligopeptide](out) + ADP + phosphate + H(+). ATP-dependent low-affinity peptide transporter which translocates a broad spectrum of peptides from the cytosol to the lysosomal lumen for degradation. Displays a broad peptide length specificity from 6-mer up to at least 59-mer peptides with an optimum of 23-mers. Binds and transports smaller and larger peptides with the same affinity. Favors positively charged, aromatic or hydrophobic residues in the N- and C-terminal positions whereas negatively charged residues as well as asparagine and methionine are not favored. In Rattus norvegicus (Rat), this protein is ABC-type oligopeptide transporter ABCB9.